We begin with the raw amino-acid sequence, 385 residues long: Polyketide synthase 2 (385 aa).

Cysteine 157 is a catalytic residue.

It belongs to the thiolase-like superfamily. Chalcone/stilbene synthases family. Expressed in leaves and glandular trichomes.

The protein resides in the cytoplasm. In terms of biological role, polyketide synthase responsible for the biosynthesis of secondary metabolites. In Cannabis sativa (Hemp), this protein is Polyketide synthase 2 (PKSG2).